The following is a 122-amino-acid chain: Small ribosomal subunit protein uS13 (122 aa).

The segment at 95–122 (GLPVHGQRTHTNARTRKGPRRGAVGKKK) is disordered.

The protein belongs to the universal ribosomal protein uS13 family. In terms of assembly, part of the 30S ribosomal subunit. Forms a loose heterodimer with protein S19. Forms two bridges to the 50S subunit in the 70S ribosome.

In terms of biological role, located at the top of the head of the 30S subunit, it contacts several helices of the 16S rRNA. In the 70S ribosome it contacts the 23S rRNA (bridge B1a) and protein L5 of the 50S subunit (bridge B1b), connecting the 2 subunits; these bridges are implicated in subunit movement. Contacts the tRNAs in the A and P-sites. The sequence is that of Small ribosomal subunit protein uS13 from Desulfovibrio desulfuricans (strain ATCC 27774 / DSM 6949 / MB).